Here is a 365-residue protein sequence, read N- to C-terminus: Probable 7-methylxanthine methyltransferase 4 (365 aa).

Y18 contributes to the S-adenosyl-L-homocysteine binding site. Position 25 (T25) interacts with theobromine. Residues C62, Q67, D99, L100, S132, and F133 each coordinate S-adenosyl-L-homocysteine. Theobromine is bound by residues Y150, H153, and W154. Positions 170, 256, 258, and 259 each coordinate Mg(2+). Position 311 (F311) interacts with theobromine.

The protein belongs to the methyltransferase superfamily. Type-7 methyltransferase family. The cofactor is Mg(2+).

It carries out the reaction 7-methylxanthine + S-adenosyl-L-methionine = theobromine + S-adenosyl-L-homocysteine + H(+). Its pathway is alkaloid biosynthesis. Involved in the biosynthesis of theobromine. The sequence is that of Probable 7-methylxanthine methyltransferase 4 from Theobroma cacao (Cacao).